The sequence spans 633 residues: DEAD-box ATP-dependent RNA helicase 27 (633 aa).

Residues 1-17 (MANLDMEQHSSENEEIK) show a composition bias toward basic and acidic residues. The segment at 1-147 (MANLDMEQHS…DKEEEKKLEE (147 aa)) is disordered. Positions 2–34 (ANLDMEQHSSENEEIKKKKHKKRARDEAKKLKQ) form a coiled coil. Composition is skewed to acidic residues over residues 37-47 (MEEEPDHEDGD) and 74-83 (DDGEDEAVAE). Residues 88 to 97 (KKKKKNKKLQ) show a composition bias toward basic residues. Composition is skewed to acidic residues over residues 103 to 114 (NDEEDEVIAEEE) and 131 to 140 (SEEEEVEDKE). The stretch at 117–153 (KKKKKKQRKDTEAKSEEEEVEDKEEEKKLEETSIMTN) forms a coiled coil. The Q motif signature appears at 154–182 (KTFESLSLSDNTYKSIKEMGFARMTQIQA). A Helicase ATP-binding domain is found at 185–360 (IPPLMMGEDV…RVSLTSPVYI (176 aa)). 198–205 (ARTGSGKT) contributes to the ATP binding site. Positions 308–311 (DEAD) match the DEAD box motif. In terms of domain architecture, Helicase C-terminal spans 386 to 534 (RLLFLLTFLK…EHEFEEKKLL (149 aa)). Residues 608 to 633 (KREPVNKFKRGRGGGRPGGKSKFERY) form a disordered region.

The protein belongs to the DEAD box helicase family. DDX18/HAS1 subfamily.

It carries out the reaction ATP + H2O = ADP + phosphate + H(+). The sequence is that of DEAD-box ATP-dependent RNA helicase 27 (RH27) from Arabidopsis thaliana (Mouse-ear cress).